We begin with the raw amino-acid sequence, 331 residues long: Holliday junction branch migration complex subunit RuvB (331 aa).

Positions 1–186 (MAKTMMQDRL…FGIVQRLEFY (186 aa)) are large ATPase domain (RuvB-L). ATP contacts are provided by residues Ile25, Arg26, Gly67, Lys70, Thr71, Thr72, 133–135 (EDF), Arg176, Tyr186, and Arg223. Mg(2+) is bound at residue Thr71. Residues 187-257 (NIADLTTIVS…IAGSALDMLA (71 aa)) are small ATPAse domain (RuvB-S). A head domain (RuvB-H) region spans residues 260–331 (RRGLDHLDRR…LTQMAIDQMV (72 aa)). DNA is bound by residues Arg296, Arg315, and Arg320.

The protein belongs to the RuvB family. In terms of assembly, homohexamer. Forms an RuvA(8)-RuvB(12)-Holliday junction (HJ) complex. HJ DNA is sandwiched between 2 RuvA tetramers; dsDNA enters through RuvA and exits via RuvB. An RuvB hexamer assembles on each DNA strand where it exits the tetramer. Each RuvB hexamer is contacted by two RuvA subunits (via domain III) on 2 adjacent RuvB subunits; this complex drives branch migration. In the full resolvosome a probable DNA-RuvA(4)-RuvB(12)-RuvC(2) complex forms which resolves the HJ.

It is found in the cytoplasm. The catalysed reaction is ATP + H2O = ADP + phosphate + H(+). Functionally, the RuvA-RuvB-RuvC complex processes Holliday junction (HJ) DNA during genetic recombination and DNA repair, while the RuvA-RuvB complex plays an important role in the rescue of blocked DNA replication forks via replication fork reversal (RFR). RuvA specifically binds to HJ cruciform DNA, conferring on it an open structure. The RuvB hexamer acts as an ATP-dependent pump, pulling dsDNA into and through the RuvAB complex. RuvB forms 2 homohexamers on either side of HJ DNA bound by 1 or 2 RuvA tetramers; 4 subunits per hexamer contact DNA at a time. Coordinated motions by a converter formed by DNA-disengaged RuvB subunits stimulates ATP hydrolysis and nucleotide exchange. Immobilization of the converter enables RuvB to convert the ATP-contained energy into a lever motion, pulling 2 nucleotides of DNA out of the RuvA tetramer per ATP hydrolyzed, thus driving DNA branch migration. The RuvB motors rotate together with the DNA substrate, which together with the progressing nucleotide cycle form the mechanistic basis for DNA recombination by continuous HJ branch migration. Branch migration allows RuvC to scan DNA until it finds its consensus sequence, where it cleaves and resolves cruciform DNA. The sequence is that of Holliday junction branch migration complex subunit RuvB from Psychrobacter arcticus (strain DSM 17307 / VKM B-2377 / 273-4).